The primary structure comprises 510 residues: Ankyrin repeat domain-containing protein 13C-A (510 aa).

The segment covering Met1–Glu19 has biased composition (basic and acidic residues). The segment at Met1–Thr35 is disordered. ANK repeat units lie at residues Asp80–Ser111, His112–Val141, and Gln145–Arg174.

The protein localises to the endoplasmic reticulum membrane. In terms of biological role, acts as a molecular chaperone for G protein-coupled receptors, regulating their biogenesis and exit from the ER. The chain is Ankyrin repeat domain-containing protein 13C-A (ankrd13c-a) from Xenopus laevis (African clawed frog).